We begin with the raw amino-acid sequence, 411 residues long: KIN17-like protein (411 aa).

A C2H2-type zinc finger spans residues 28–50 (CQMCQKQCRDENGFKCHCMSESH). The tract at residues 51 to 160 (QRQMQVFGQN…KERLKNKRVK (110 aa)) is winged helix-turn-helix (wHTH). A coiled-coil region spans residues 147–183 (ETLFKERLKNKRVKSDLAEEEKQEREIQRQIERAAEK). Disordered regions lie at residues 182–211 (EKLN…KKDE) and 232–286 (VATG…EEEK). Residues 253–286 (KVERGEKRKRSGDSGRSEKERRSALDELMKEEEK) show a composition bias toward basic and acidic residues. The Nuclear localization signal (NLS) signature appears at 259-262 (KRKR). Positions 265–294 (DSGRSEKERRSALDELMKEEEKKKERMNRK) form a coiled coil. Residues 301-352 (GIIVKVMSKALAEKGYYKQKGVVKKVIDNYVGEIKMLDSKHVLRVDQKELET) are C-terminal subdomain A. Residues 358-409 (GGMVKIVNGAYRGSNARLLGVDTEKFCAKVQIEKGVYDGRVIKSIEYEDICK) are C-terminal subdomain B.

The protein belongs to the KIN17 family. As to quaternary structure, interacts with SPL7. In terms of tissue distribution, expressed in root vasculature, lateral roots, cotyledons, rosette leaves, cauline leaves, stems, sepals, style of pistils, mature pollen grains and siliques.

Its subcellular location is the nucleus speckle. Promotes the copper deficiency response by direct interaction with SPL7. Acts with SPL7 in a common pathway to promote copper-responsive genes and alleviate oxidative stress during copper-limiting periods. May promote SPL7 function when copper is limiting. Participates in the control of general plant growth and development, and in the response to counteract the negative effects of UV radiation. This Arabidopsis thaliana (Mouse-ear cress) protein is KIN17-like protein.